A 530-amino-acid chain; its full sequence is Plexin domain-containing protein 2 (530 aa).

The N-terminal stretch at 1 to 30 (MARFRRADLAAAGVMLLCHFLTDRFQFAHG) is a signal peptide. The Extracellular segment spans residues 31 to 455 (EPGHHTNDWI…AEKKGGTLHA (425 aa)). Residues Asn-103 and Asn-160 are each glycosylated (N-linked (GlcNAc...) asparagine). A PSI domain is found at 327–372 (TCLQFNGCGPCVSSQIGFNCSWCSKLQRCSSGFDRHRQDWVDSGCP). Positions 378–387 (KEKMCEKTEP) are enriched in basic and acidic residues. The disordered stretch occupies residues 378-399 (KEKMCEKTEPGETSQTTTTSHT). Low complexity predominate over residues 390 to 399 (TSQTTTTSHT). A helical transmembrane segment spans residues 456–476 (GLIVGILILVLIIAAAILVTV). Residues 477–530 (YMYHHPTSAASIFFIERRPSRWPAMKFRRGSGHPAYAEVEPVGEKEGFIVSEQC) are Cytoplasmic-facing. Residue Ser-507 is modified to Phosphoserine.

The protein belongs to the plexin family. As to quaternary structure, interacts with CTTN. In terms of tissue distribution, expressed in tumor endothelium and in vessels of some normal tissues, such as the muscle and lung.

Its subcellular location is the membrane. In terms of biological role, may play a role in tumor angiogenesis. The protein is Plexin domain-containing protein 2 (Plxdc2) of Mus musculus (Mouse).